Reading from the N-terminus, the 252-residue chain is Origin recognition complex subunit 6 (252 aa).

The interval 188 to 232 (REPGDVATPPRKRKKIVVEAPAKEMEKVEEMPHKPQKDEDLTQDY) is disordered. Position 195 is a phosphothreonine (Thr-195). A compositionally biased stretch (basic and acidic residues) spans 208–232 (PAKEMEKVEEMPHKPQKDEDLTQDY). Lys-210 participates in a covalent cross-link: Glycyl lysine isopeptide (Lys-Gly) (interchain with G-Cter in SUMO2). Position 229 is a phosphothreonine (Thr-229).

This sequence belongs to the ORC6 family. As to quaternary structure, component of ORC, a complex composed of at least 6 subunits: ORC1, ORC2, ORC3, ORC4, ORC5 and ORC6. ORC is regulated in a cell-cycle dependent manner. It is sequentially assembled at the exit from anaphase of mitosis and disassembled as cells enter S phase. Interacts with DBF4.

The protein resides in the nucleus. In terms of biological role, component of the origin recognition complex (ORC) that binds origins of replication. DNA-binding is ATP-dependent. The specific DNA sequences that define origins of replication have not been identified yet. ORC is required to assemble the pre-replication complex necessary to initiate DNA replication. Does not bind histone H3 and H4 trimethylation marks H3K9me3, H3K27me3 and H4K20me3. This is Origin recognition complex subunit 6 (ORC6) from Homo sapiens (Human).